Consider the following 290-residue polypeptide: Undecaprenyl-diphosphatase (290 aa).

6 helical membrane passes run 39–59, 85–105, 118–138, 202–222, 230–250, and 261–281; these read PGAAFTAISQIGTEAAVLIYF, AQMGWLVIVGSIPIGVLGITL, LIATTLIVMGIVLGVADRLAA, SFLLAIPAVLASGAYELKDVG, PTIFATLVAFFVGYAVIAWFM, and FVIYRILLGVVLFILIWAGVL.

This sequence belongs to the UppP family.

The protein localises to the cell membrane. The catalysed reaction is di-trans,octa-cis-undecaprenyl diphosphate + H2O = di-trans,octa-cis-undecaprenyl phosphate + phosphate + H(+). Functionally, catalyzes the dephosphorylation of undecaprenyl diphosphate (UPP). Confers resistance to bacitracin. The polypeptide is Undecaprenyl-diphosphatase (Streptomyces griseus subsp. griseus (strain JCM 4626 / CBS 651.72 / NBRC 13350 / KCC S-0626 / ISP 5235)).